Here is a 658-residue protein sequence, read N- to C-terminus: Sulfate transporter 3.1 (658 aa).

Residues M1–D85 lie on the Cytoplasmic side of the membrane. A helical transmembrane segment spans residues L86–L106. Residues A107 to N108 are Extracellular-facing. The helical transmembrane segment at L109–G129 threads the bilayer. Residues S130 to D133 lie on the Cytoplasmic side of the membrane. A helical transmembrane segment spans residues L134–V154. The Extracellular segment spans residues D155–Y163. Residues L164–F184 traverse the membrane as a helical segment. R185 is a topological domain (cytoplasmic). A helical transmembrane segment spans residues L186–A206. Topologically, residues T207 to W245 are extracellular. Residues E246–I266 form a helical membrane-spanning segment. Over K267 to F271 the chain is Cytoplasmic. The chain crosses the membrane as a helical span at residues F272–F292. At T293–G332 the chain is on the extracellular side. The helical transmembrane segment at L333 to F353 threads the bilayer. Over K354–E363 the chain is Cytoplasmic. The chain crosses the membrane as a helical span at residues M364–G384. The Extracellular portion of the chain corresponds to P385–K398. The helical transmembrane segment at T399–P419 threads the bilayer. The Cytoplasmic portion of the chain corresponds to L420–P425. A helical transmembrane segment spans residues L426–A446. Residues I447 to Y464 lie on the Extracellular side of the membrane. A helical transmembrane segment spans residues V465–A485. Residues R486–V658 lie on the Cytoplasmic side of the membrane. The STAS domain maps to Q513–C637.

Belongs to the SLC26A/SulP transporter (TC 2.A.53) family. Expressed only in leaves.

Its subcellular location is the membrane. Its function is as follows. H(+)/sulfate cotransporter that may play a role in the regulation of sulfate assimilation. The sequence is that of Sulfate transporter 3.1 (SULTR3;1) from Arabidopsis thaliana (Mouse-ear cress).